A 263-amino-acid polypeptide reads, in one-letter code: 3-deoxy-manno-octulosonate cytidylyltransferase 1 (263 aa).

This sequence belongs to the KdsB family.

The protein localises to the cytoplasm. The catalysed reaction is 3-deoxy-alpha-D-manno-oct-2-ulosonate + CTP = CMP-3-deoxy-beta-D-manno-octulosonate + diphosphate. The protein operates within nucleotide-sugar biosynthesis; CMP-3-deoxy-D-manno-octulosonate biosynthesis; CMP-3-deoxy-D-manno-octulosonate from 3-deoxy-D-manno-octulosonate and CTP: step 1/1. Its pathway is bacterial outer membrane biogenesis; lipopolysaccharide biosynthesis. Its function is as follows. Activates KDO (a required 8-carbon sugar) for incorporation into bacterial lipopolysaccharide in Gram-negative bacteria. This chain is 3-deoxy-manno-octulosonate cytidylyltransferase 1, found in Burkholderia ambifaria (strain MC40-6).